The following is a 29-amino-acid chain: Cytochrome b6-f complex subunit 8 (29 aa).

A helical membrane pass occupies residues 3–23 (TVSLAWAALMVVFTFSLSLVV).

This sequence belongs to the PetN family. As to quaternary structure, the 4 large subunits of the cytochrome b6-f complex are cytochrome b6, subunit IV (17 kDa polypeptide, PetD), cytochrome f and the Rieske protein, while the 4 small subunits are PetG, PetL, PetM and PetN. The complex functions as a dimer.

The protein localises to the plastid. It is found in the chloroplast thylakoid membrane. Component of the cytochrome b6-f complex, which mediates electron transfer between photosystem II (PSII) and photosystem I (PSI), cyclic electron flow around PSI, and state transitions. The protein is Cytochrome b6-f complex subunit 8 of Chloranthus spicatus (Chulantree).